Here is a 467-residue protein sequence, read N- to C-terminus: Putative vacuolar protein sorting-associated protein TDA6 (467 aa).

A helical membrane pass occupies residues 8 to 28 (ILLWFLIVDLSVIRALVLPPL). N-linked (GlcNAc...) asparagine glycans are attached at residues asparagine 61, asparagine 124, and asparagine 141.

The protein belongs to the VPS62 family.

It is found in the membrane. Functionally, involved in vacuolar protein sorting. This chain is Putative vacuolar protein sorting-associated protein TDA6 (TDA6), found in Saccharomyces cerevisiae (strain ATCC 204508 / S288c) (Baker's yeast).